The primary structure comprises 208 residues: Small ribosomal subunit protein uS4 (208 aa).

Residues 98-163 form the S4 RNA-binding domain; the sequence is QRLDNVVYRM…NPQITRAIEL (66 aa).

This sequence belongs to the universal ribosomal protein uS4 family. In terms of assembly, part of the 30S ribosomal subunit. Contacts protein S5. The interaction surface between S4 and S5 is involved in control of translational fidelity.

One of the primary rRNA binding proteins, it binds directly to 16S rRNA where it nucleates assembly of the body of the 30S subunit. Functionally, with S5 and S12 plays an important role in translational accuracy. The polypeptide is Small ribosomal subunit protein uS4 (Campylobacter jejuni subsp. jejuni serotype O:6 (strain 81116 / NCTC 11828)).